Reading from the N-terminus, the 268-residue chain is Shikimate dehydrogenase (NADP(+)) (268 aa).

Shikimate contacts are provided by residues 13-15 (SLS) and threonine 60. Catalysis depends on lysine 64, which acts as the Proton acceptor. Aspartate 76 contacts NADP(+). Shikimate-binding residues include asparagine 85 and aspartate 100. NADP(+)-binding positions include 124 to 128 (GAGGA), 148 to 153 (NRTMSR), and isoleucine 209. Shikimate is bound at residue tyrosine 211. Glycine 232 serves as a coordination point for NADP(+).

It belongs to the shikimate dehydrogenase family. As to quaternary structure, homodimer.

It catalyses the reaction shikimate + NADP(+) = 3-dehydroshikimate + NADPH + H(+). It functions in the pathway metabolic intermediate biosynthesis; chorismate biosynthesis; chorismate from D-erythrose 4-phosphate and phosphoenolpyruvate: step 4/7. Its function is as follows. Involved in the biosynthesis of the chorismate, which leads to the biosynthesis of aromatic amino acids. Catalyzes the reversible NADPH linked reduction of 3-dehydroshikimate (DHSA) to yield shikimate (SA). The protein is Shikimate dehydrogenase (NADP(+)) of Staphylococcus haemolyticus (strain JCSC1435).